The sequence spans 418 residues: Tyrosine--tRNA ligase (418 aa).

Tyr34 lines the L-tyrosine pocket. The 'HIGH' region signature appears at 39–48 (PTADSLHLGH). Positions 169 and 173 each coordinate L-tyrosine. A 'KMSKS' region motif is present at residues 229-233 (KFGKS). Lys232 contributes to the ATP binding site. The S4 RNA-binding domain occupies 352 to 418 (LNIVDMLVTA…GKKKYAVLTY (67 aa)).

This sequence belongs to the class-I aminoacyl-tRNA synthetase family. TyrS type 1 subfamily. As to quaternary structure, homodimer.

Its subcellular location is the cytoplasm. It carries out the reaction tRNA(Tyr) + L-tyrosine + ATP = L-tyrosyl-tRNA(Tyr) + AMP + diphosphate + H(+). In terms of biological role, catalyzes the attachment of tyrosine to tRNA(Tyr) in a two-step reaction: tyrosine is first activated by ATP to form Tyr-AMP and then transferred to the acceptor end of tRNA(Tyr). The polypeptide is Tyrosine--tRNA ligase (Streptococcus equi subsp. equi (strain 4047)).